Consider the following 253-residue polypeptide: Sulfate transporter CysZ (253 aa).

A run of 4 helical transmembrane segments spans residues 31–51 (FVIL…WWLF), 75–95 (LLWP…FSTI), 151–171 (IVLL…PVLW), and 222–242 (IPLL…AMWV).

It belongs to the CysZ family.

It localises to the cell inner membrane. High affinity, high specificity proton-dependent sulfate transporter, which mediates sulfate uptake. Provides the sulfur source for the cysteine synthesis pathway. This Escherichia coli O8 (strain IAI1) protein is Sulfate transporter CysZ.